Consider the following 196-residue polypeptide: Putative adenylate kinase (196 aa).

Residues glycine 10, glycine 12, lysine 13, threonine 14, and serine 15 each contribute to the ATP site. An NMP region spans residues 30 to 53 (YLNDLIKEEHLYSEVDEERDSVIA). Residues 118 to 128 (KRGYSEEKINE) form an LID region. Arginine 119 is a binding site for ATP.

It belongs to the adenylate kinase family. AK6 subfamily. Interacts with uS11. Not a structural component of 40S pre-ribosomes, but transiently interacts with them by binding to uS11.

The enzyme catalyses AMP + ATP = 2 ADP. It catalyses the reaction ATP + H2O = ADP + phosphate + H(+). Functionally, broad-specificity nucleoside monophosphate (NMP) kinase that catalyzes the reversible transfer of the terminal phosphate group between nucleoside triphosphates and monophosphates. Also has ATPase activity. Involved in the late maturation steps of the 30S ribosomal particles, specifically 16S rRNA maturation. While NMP activity is not required for ribosome maturation, ATPase activity is. Associates transiently with small ribosomal subunit protein uS11. ATP hydrolysis breaks the interaction with uS11. May temporarily remove uS11 from the ribosome to enable a conformational change of the ribosomal RNA that is needed for the final maturation step of the small ribosomal subunit. This Methanosarcina mazei (strain ATCC BAA-159 / DSM 3647 / Goe1 / Go1 / JCM 11833 / OCM 88) (Methanosarcina frisia) protein is Putative adenylate kinase.